A 111-amino-acid polypeptide reads, in one-letter code: Resistin-like gamma (111 aa).

The N-terminal stretch at 1-23 (MKTAICSLLICIFLLQLMVPVNT) is a signal peptide. 5 disulfides stabilise this stretch: Cys55/Cys108, Cys67/Cys107, Cys76/Cys93, Cys78/Cys95, and Cys82/Cys97.

This sequence belongs to the resistin/FIZZ family. Homodimer. Heterodimer with RETNLB. As to expression, highly expressed in bone marrow, spleen and white blood cells. Also detected at low levels in thymus, lung, trachea, white adipose tissue, nasal respiratory epithelium, colon, small intestine, kidney, liver, and heart.

Its subcellular location is the secreted. Probable hormone. Promotes chemotaxis in myeloid cells. This Rattus norvegicus (Rat) protein is Resistin-like gamma.